A 138-amino-acid chain; its full sequence is Holo-[acyl-carrier-protein] synthase (138 aa).

The Mg(2+) site is built by D8 and E57.

The protein belongs to the P-Pant transferase superfamily. AcpS family. Requires Mg(2+) as cofactor.

The protein resides in the cytoplasm. The catalysed reaction is apo-[ACP] + CoA = holo-[ACP] + adenosine 3',5'-bisphosphate + H(+). Its function is as follows. Transfers the 4'-phosphopantetheine moiety from coenzyme A to a Ser of acyl-carrier-protein. The protein is Holo-[acyl-carrier-protein] synthase of Phenylobacterium zucineum (strain HLK1).